Consider the following 161-residue polypeptide: 2-C-methyl-D-erythritol 2,4-cyclodiphosphate synthase (161 aa).

A divalent metal cation-binding residues include aspartate 10 and histidine 12. Residues 10-12 (DVH) and 36-37 (HS) each bind 4-CDP-2-C-methyl-D-erythritol 2-phosphate. An a divalent metal cation-binding site is contributed by histidine 44. Residues 58–60 (DIG), 63–67 (FPDTD), 102–108 (AQAPKMA), 134–137 (TTTE), phenylalanine 141, and arginine 144 contribute to the 4-CDP-2-C-methyl-D-erythritol 2-phosphate site.

Belongs to the IspF family. Homotrimer. The cofactor is a divalent metal cation.

It catalyses the reaction 4-CDP-2-C-methyl-D-erythritol 2-phosphate = 2-C-methyl-D-erythritol 2,4-cyclic diphosphate + CMP. Its pathway is isoprenoid biosynthesis; isopentenyl diphosphate biosynthesis via DXP pathway; isopentenyl diphosphate from 1-deoxy-D-xylulose 5-phosphate: step 4/6. In terms of biological role, involved in the biosynthesis of isopentenyl diphosphate (IPP) and dimethylallyl diphosphate (DMAPP), two major building blocks of isoprenoid compounds. Catalyzes the conversion of 4-diphosphocytidyl-2-C-methyl-D-erythritol 2-phosphate (CDP-ME2P) to 2-C-methyl-D-erythritol 2,4-cyclodiphosphate (ME-CPP) with a corresponding release of cytidine 5-monophosphate (CMP). The protein is 2-C-methyl-D-erythritol 2,4-cyclodiphosphate synthase of Shewanella baltica (strain OS155 / ATCC BAA-1091).